The primary structure comprises 71 residues: Pro-glucagon (71 aa).

Belongs to the glucagon family.

It is found in the secreted. Functionally, plays a key role in glucose metabolism and homeostasis. Regulates blood glucose by increasing gluconeogenesis and decreasing glycolysis. The sequence is that of Pro-glucagon (gcg) from Piaractus mesopotamicus (Small-scaled pacu).